We begin with the raw amino-acid sequence, 388 residues long: S-adenosylmethionine synthase (388 aa).

ATP is bound at residue His16. Asp18 is a binding site for Mg(2+). Glu44 lines the K(+) pocket. L-methionine-binding residues include Glu57 and Gln100. Residues 100 to 110 are flexible loop; it reads QSADIAQGVNE. ATP is bound by residues 167–169, 233–234, Asp242, 248–249, Ala265, and Lys269; these read DAK, RF, and RK. Residue Asp242 participates in L-methionine binding. Lys273 is an L-methionine binding site.

Belongs to the AdoMet synthase family. In terms of assembly, homotetramer; dimer of dimers. Mg(2+) is required as a cofactor. The cofactor is K(+).

It localises to the cytoplasm. It carries out the reaction L-methionine + ATP + H2O = S-adenosyl-L-methionine + phosphate + diphosphate. The protein operates within amino-acid biosynthesis; S-adenosyl-L-methionine biosynthesis; S-adenosyl-L-methionine from L-methionine: step 1/1. Its function is as follows. Catalyzes the formation of S-adenosylmethionine (AdoMet) from methionine and ATP. The overall synthetic reaction is composed of two sequential steps, AdoMet formation and the subsequent tripolyphosphate hydrolysis which occurs prior to release of AdoMet from the enzyme. This is S-adenosylmethionine synthase from Aromatoleum aromaticum (strain DSM 19018 / LMG 30748 / EbN1) (Azoarcus sp. (strain EbN1)).